Reading from the N-terminus, the 405-residue chain is CLIP domain-containing serine protease B8 (405 aa).

The first 24 residues, 1–24, serve as a signal peptide directing secretion; sequence MSSAVLLLLVCGCALAVLSPVAYG. 3 disulfide bridges follow: C41–C94, C52–C84, and C58–C95. In terms of domain architecture, Clip spans 41–95; the sequence is CDIPNEPNPGQCMLPAECVAYGKINDVSSLSSIERFSFIKQIQCNGSDTVPYVCC. N-linked (GlcNAc...) asparagine glycans are attached at residues N85 and N108. Residues 137–404 form the Peptidase S1 domain; that stretch reads IRGGQLAEID…YLPWIKMYTG (268 aa). A disulfide bond links C167 and C183. Residues H182 and D249 each act as charge relay system in the active site. 2 disulfide bridges follow: C322-C339 and C349-C380. S353 (charge relay system) is an active-site residue.

It belongs to the peptidase S1 family. CLIP subfamily. Post-translationally, proteolytic cleavage is necessary for activation. Cleaved and activated by CLIPB4.

It is found in the secreted. Functionally, serine protease that functions in the melanization-mediated immune response. Preferentially, cleaves substrates with an arginine at the P1 site. May be involved in the activation of the prophenoloxidase cascade upstream of CLIPB9; does not cleave prophenoloxidase. This is CLIP domain-containing serine protease B8 from Anopheles gambiae (African malaria mosquito).